An 841-amino-acid polypeptide reads, in one-letter code: Protein translocase subunit SecA (841 aa).

ATP-binding positions include Gln-85, 103–107, and Asp-492; that span reads GEGKT. The segment at 788 to 841 is disordered; sequence EVVQGQTTAHQPQEGDEEKTVKKKPVRKVVDIGRNSPCHCGSGKKYKNCHGKTE. Zn(2+)-binding residues include Cys-825, Cys-827, Cys-836, and His-837. The segment covering 829–841 has biased composition (basic residues); the sequence is SGKKYKNCHGKTE.

This sequence belongs to the SecA family. As to quaternary structure, monomer and homodimer. Part of the essential Sec protein translocation apparatus which comprises SecA, SecYEG and auxiliary proteins SecDF. Other proteins may also be involved. Zn(2+) serves as cofactor.

The protein localises to the cell membrane. Its subcellular location is the cytoplasm. It carries out the reaction ATP + H2O + cellular proteinSide 1 = ADP + phosphate + cellular proteinSide 2.. Its function is as follows. Part of the Sec protein translocase complex. Interacts with the SecYEG preprotein conducting channel. Has a central role in coupling the hydrolysis of ATP to the transfer of proteins into and across the cell membrane, serving as an ATP-driven molecular motor driving the stepwise translocation of polypeptide chains across the membrane. The polypeptide is Protein translocase subunit SecA (Bacillus pumilus (strain SAFR-032)).